Consider the following 41-residue polypeptide: U-AITX-Bg1a (41 aa).

3 disulfide bridges follow: cysteine 2–cysteine 35, cysteine 4–cysteine 28, and cysteine 18–cysteine 36.

The protein belongs to the sea anemone type 3 (BDS) potassium channel toxin family.

The protein resides in the secreted. It localises to the nematocyst. Functionally, potently and selectively inhibits voltage-gated potassium channels Kv11/KCNH/ERG. Acts as a gating-modifier toxin that shifts the voltage-dependence of ERG activation in the positive direction and suppresses its current amplitudes elicited by strong depolarizing pulses that maximally activate the channels. The polypeptide is U-AITX-Bg1a (Bunodosoma granuliferum (Red warty sea anemone)).